Here is a 305-residue protein sequence, read N- to C-terminus: MALSSRLWRRLPPLRVCQQTRTWGSRGRCGAWGVRACEVIGNTRPFKRGFLFSALSYLGFETYQIISQAAVVHATAKVEEILAQADYLYESGETEKLYQLLIQYKESEDGELLWRLARASRDIAQLSKTSEEEKKVLVYEALDYAKRALEKKESSSAAHKWYAICISDVGDYEGIKVKIANAYVIKEHFEKAIELNPKDATSIHLMGIWCYTFAEMPWYQRRIAKVLFANPPSSTYEEALRYFHKAEEVDPNFYSKNLLLLGKTYLKLNNKKLAAFWLVKAKGYPAHTEEDKQIQTEAAQLLTGL.

Residue Lys160 is modified to N6-succinyllysine. 2 TPR repeats span residues 163-199 (AICISDVGDYEGIKVKIANAYVIKEHFEKAIELNPKD) and 217-253 (PWYQRRIAKVLFANPPSSTYEEALRYFHKAEEVDPNF). Residue Lys245 is modified to N6-succinyllysine.

This sequence belongs to the RMDN family. As to quaternary structure, interacts with microtubules.

It is found in the cytoplasm. Its subcellular location is the cytoskeleton. The protein resides in the spindle. The protein localises to the spindle pole. The chain is Regulator of microtubule dynamics protein 1 (Rmdn1) from Mus musculus (Mouse).